A 149-amino-acid polypeptide reads, in one-letter code: Large ribosomal subunit protein bL9 (149 aa).

This sequence belongs to the bacterial ribosomal protein bL9 family.

In terms of biological role, binds to the 23S rRNA. The sequence is that of Large ribosomal subunit protein bL9 from Sulfurihydrogenibium sp. (strain YO3AOP1).